We begin with the raw amino-acid sequence, 347 residues long: MKQTIILLYGGRSAEREVSVLSAESVMRAVDYDRFTVKTFFISQSGDFIKTQEFSHAPGQEDRLMTNETIDWDKKVAPSAIYEEGAVVFPVLHGPMGEDGSVQGFLEVLKMPYVGCNILSSSLAMDKITTKRVLESAGIAQVPYVAIVEGDDVTAKIAEVEEKLAYPVFTKPSNMGSSVGISKSENQEELRQALKLAFRYDSRVLVEQGVNAREIEVGLLGNYDVKSTLPGEVVKDVAFYDYDAKYIDNKITMDIPAKISDDVVAVMRQNAETAFRAIGGLGLSRCDFFYTDKGEIFLNELNTMPGFTQWSMYPLLWDNMGISYPKLIERLVDLAKESFDKREAHLI.

Positions 131 to 333 (KRVLESAGIA…YPKLIERLVD (203 aa)) constitute an ATP-grasp domain. Residue 161–216 (EEKLAYPVFTKPSNMGSSVGISKSENQEELRQALKLAFRYDSRVLVEQGVNAREIE) coordinates ATP. Mg(2+) is bound by residues Asp287, Glu300, and Asn302.

Belongs to the D-alanine--D-alanine ligase family. It depends on Mg(2+) as a cofactor. Requires Mn(2+) as cofactor.

The protein localises to the cytoplasm. The catalysed reaction is 2 D-alanine + ATP = D-alanyl-D-alanine + ADP + phosphate + H(+). Its pathway is cell wall biogenesis; peptidoglycan biosynthesis. In terms of biological role, cell wall formation. The chain is D-alanine--D-alanine ligase from Streptococcus pneumoniae serotype 4 (strain ATCC BAA-334 / TIGR4).